The sequence spans 561 residues: Dihydroxy-acid dehydratase (561 aa).

Cys50 is a [2Fe-2S] cluster binding site. Mg(2+) is bound at residue Asp82. Cys123 is a binding site for [2Fe-2S] cluster. Positions 124 and 125 each coordinate Mg(2+). Lys125 carries the post-translational modification N6-carboxylysine. Residue Cys195 participates in [2Fe-2S] cluster binding. Glu447 serves as a coordination point for Mg(2+). Ser473 acts as the Proton acceptor in catalysis.

It belongs to the IlvD/Edd family. As to quaternary structure, homodimer. [2Fe-2S] cluster serves as cofactor. It depends on Mg(2+) as a cofactor.

The catalysed reaction is (2R)-2,3-dihydroxy-3-methylbutanoate = 3-methyl-2-oxobutanoate + H2O. It carries out the reaction (2R,3R)-2,3-dihydroxy-3-methylpentanoate = (S)-3-methyl-2-oxopentanoate + H2O. The protein operates within amino-acid biosynthesis; L-isoleucine biosynthesis; L-isoleucine from 2-oxobutanoate: step 3/4. Its pathway is amino-acid biosynthesis; L-valine biosynthesis; L-valine from pyruvate: step 3/4. Functionally, functions in the biosynthesis of branched-chain amino acids. Catalyzes the dehydration of (2R,3R)-2,3-dihydroxy-3-methylpentanoate (2,3-dihydroxy-3-methylvalerate) into 2-oxo-3-methylpentanoate (2-oxo-3-methylvalerate) and of (2R)-2,3-dihydroxy-3-methylbutanoate (2,3-dihydroxyisovalerate) into 2-oxo-3-methylbutanoate (2-oxoisovalerate), the penultimate precursor to L-isoleucine and L-valine, respectively. The polypeptide is Dihydroxy-acid dehydratase (Microcystis aeruginosa (strain NIES-843 / IAM M-2473)).